A 243-amino-acid chain; its full sequence is UDP-2,3-diacylglucosamine hydrolase (243 aa).

5 residues coordinate Mn(2+): D9, H11, D42, N79, and H114. Substrate is bound at residue 79–80; sequence NR. The substrate site is built by D122, S160, N164, and H195. Residues H195 and H197 each contribute to the Mn(2+) site.

This sequence belongs to the LpxH family. Mn(2+) is required as a cofactor.

The protein localises to the cell inner membrane. It catalyses the reaction UDP-2-N,3-O-bis[(3R)-3-hydroxytetradecanoyl]-alpha-D-glucosamine + H2O = 2-N,3-O-bis[(3R)-3-hydroxytetradecanoyl]-alpha-D-glucosaminyl 1-phosphate + UMP + 2 H(+). It participates in glycolipid biosynthesis; lipid IV(A) biosynthesis; lipid IV(A) from (3R)-3-hydroxytetradecanoyl-[acyl-carrier-protein] and UDP-N-acetyl-alpha-D-glucosamine: step 4/6. Its function is as follows. Hydrolyzes the pyrophosphate bond of UDP-2,3-diacylglucosamine to yield 2,3-diacylglucosamine 1-phosphate (lipid X) and UMP by catalyzing the attack of water at the alpha-P atom. Involved in the biosynthesis of lipid A, a phosphorylated glycolipid that anchors the lipopolysaccharide to the outer membrane of the cell. This chain is UDP-2,3-diacylglucosamine hydrolase, found in Coxiella burnetii (strain Dugway 5J108-111).